A 237-amino-acid polypeptide reads, in one-letter code: D-aminoacyl-tRNA deacylase (237 aa).

Belongs to the DtdA deacylase family. As to quaternary structure, monomer. Zn(2+) is required as a cofactor.

The catalysed reaction is a D-aminoacyl-tRNA + H2O = a tRNA + a D-alpha-amino acid + H(+). It catalyses the reaction glycyl-tRNA(Ala) + H2O = tRNA(Ala) + glycine + H(+). In terms of biological role, D-aminoacyl-tRNA deacylase with broad substrate specificity. By recycling D-aminoacyl-tRNA to D-amino acids and free tRNA molecules, this enzyme counteracts the toxicity associated with the formation of D-aminoacyl-tRNA entities in vivo. The sequence is that of D-aminoacyl-tRNA deacylase from Saccharolobus islandicus (strain Y.N.15.51 / Yellowstone #2) (Sulfolobus islandicus).